The chain runs to 264 residues: Pyridoxine 5'-phosphate synthase (264 aa).

Residue asparagine 28 coordinates 3-amino-2-oxopropyl phosphate. Residue 30–31 (DH) participates in 1-deoxy-D-xylulose 5-phosphate binding. Arginine 39 provides a ligand contact to 3-amino-2-oxopropyl phosphate. Histidine 64 serves as the catalytic Proton acceptor. 1-deoxy-D-xylulose 5-phosphate-binding residues include arginine 66 and histidine 71. Residue glutamate 91 is the Proton acceptor of the active site. Threonine 121 contacts 1-deoxy-D-xylulose 5-phosphate. The active-site Proton donor is histidine 217. Residues glycine 218 and 239–240 (GH) contribute to the 3-amino-2-oxopropyl phosphate site.

Belongs to the PNP synthase family. As to quaternary structure, homooctamer; tetramer of dimers.

It localises to the cytoplasm. The enzyme catalyses 3-amino-2-oxopropyl phosphate + 1-deoxy-D-xylulose 5-phosphate = pyridoxine 5'-phosphate + phosphate + 2 H2O + H(+). It functions in the pathway cofactor biosynthesis; pyridoxine 5'-phosphate biosynthesis; pyridoxine 5'-phosphate from D-erythrose 4-phosphate: step 5/5. In terms of biological role, catalyzes the complicated ring closure reaction between the two acyclic compounds 1-deoxy-D-xylulose-5-phosphate (DXP) and 3-amino-2-oxopropyl phosphate (1-amino-acetone-3-phosphate or AAP) to form pyridoxine 5'-phosphate (PNP) and inorganic phosphate. In Psychrobacter arcticus (strain DSM 17307 / VKM B-2377 / 273-4), this protein is Pyridoxine 5'-phosphate synthase.